The sequence spans 342 residues: Nucleoid-associated protein Spea_1765 (342 aa).

It belongs to the YejK family.

Its subcellular location is the cytoplasm. It is found in the nucleoid. In Shewanella pealeana (strain ATCC 700345 / ANG-SQ1), this protein is Nucleoid-associated protein Spea_1765.